The sequence spans 170 residues: Small ribosomal subunit protein uS4 (170 aa).

Positions 100–164 (RRLQTVVYRE…SDLTDELHPA (65 aa)) constitute an S4 RNA-binding domain.

This sequence belongs to the universal ribosomal protein uS4 family. In terms of assembly, part of the 30S ribosomal subunit. Contacts protein S5. The interaction surface between S4 and S5 is involved in control of translational fidelity.

One of the primary rRNA binding proteins, it binds directly to 16S rRNA where it nucleates assembly of the body of the 30S subunit. In terms of biological role, with S5 and S12 plays an important role in translational accuracy. The sequence is that of Small ribosomal subunit protein uS4 from Halobacterium salinarum (strain ATCC 29341 / DSM 671 / R1).